The chain runs to 511 residues: Sterol 14-alpha demethylase resB (511 aa).

The helical transmembrane segment at Ile3–Val23 threads the bilayer. Heme is bound at residue Cys451.

This sequence belongs to the cytochrome P450 family. It depends on heme as a cofactor.

Its subcellular location is the membrane. It catalyses the reaction a 14alpha-methyl steroid + 3 reduced [NADPH--hemoprotein reductase] + 3 O2 = a Delta(14) steroid + formate + 3 oxidized [NADPH--hemoprotein reductase] + 4 H2O + 4 H(+). The catalysed reaction is a 14alpha-methyl steroid + reduced [NADPH--hemoprotein reductase] + O2 = a 14alpha-hydroxymethyl steroid + oxidized [NADPH--hemoprotein reductase] + H2O + H(+). The enzyme catalyses a 14alpha-hydroxymethyl steroid + reduced [NADPH--hemoprotein reductase] + O2 = a 14alpha-formyl steroid + oxidized [NADPH--hemoprotein reductase] + 2 H2O + H(+). It carries out the reaction a 14alpha-formyl steroid + reduced [NADPH--hemoprotein reductase] + O2 = a Delta(14) steroid + formate + oxidized [NADPH--hemoprotein reductase] + H2O + 2 H(+). It catalyses the reaction lanosterol + 3 reduced [NADPH--hemoprotein reductase] + 3 O2 = 4,4-dimethyl-5alpha-cholesta-8,14,24-trien-3beta-ol + formate + 3 oxidized [NADPH--hemoprotein reductase] + 4 H2O + 4 H(+). The catalysed reaction is lanosterol + reduced [NADPH--hemoprotein reductase] + O2 = 32-hydroxylanosterol + oxidized [NADPH--hemoprotein reductase] + H2O + H(+). The enzyme catalyses 32-hydroxylanosterol + reduced [NADPH--hemoprotein reductase] + O2 = 32-oxolanosterol + oxidized [NADPH--hemoprotein reductase] + 2 H2O + H(+). It carries out the reaction 32-oxolanosterol + reduced [NADPH--hemoprotein reductase] + O2 = 4,4-dimethyl-5alpha-cholesta-8,14,24-trien-3beta-ol + formate + oxidized [NADPH--hemoprotein reductase] + H2O + 2 H(+). It catalyses the reaction eburicol + 3 reduced [NADPH--hemoprotein reductase] + 3 O2 = 14-demethyleburicol + formate + 3 oxidized [NADPH--hemoprotein reductase] + 4 H2O + 4 H(+). The catalysed reaction is eburicol + reduced [NADPH--hemoprotein reductase] + O2 = 32-hydroxyeburicol + oxidized [NADPH--hemoprotein reductase] + H2O + H(+). The enzyme catalyses 32-hydroxyeburicol + reduced [NADPH--hemoprotein reductase] + O2 = 32-oxoeburicol + oxidized [NADPH--hemoprotein reductase] + 2 H2O + H(+). It carries out the reaction 32-oxoeburicol + reduced [NADPH--hemoprotein reductase] + O2 = 14-demethyleburicol + formate + oxidized [NADPH--hemoprotein reductase] + H2O + 2 H(+). Functionally, sterol 14-alpha demethylase; part of the gene cluster that mediates the biosynthesis of the tetrahydropyranyl antifungal agent restricticin that acts as an inhibitor of CYP51 and blocks the ergosterol biosynthesis. Sterol 14-alpha-demethylase plays a critical role in the biosynthesis of ergosterol, the major sterol component in fungal membranes that participates in a variety of functions. ResB acts as a self-resistant CYP51 that contains mutations found in CYP51s isolated from azole resistance strains and that is not inhibited by the final product of the cluster, restricticin. The protein is Sterol 14-alpha demethylase resB of Aspergillus sclerotiorum.